Consider the following 614-residue polypeptide: Bifunctional 3'-phosphoadenosine 5'-phosphosulfate synthase 2 (614 aa).

The adenylyl-sulfate kinase stretch occupies residues 1-215; sequence MSGIKKQKTE…VVELLQEQNI (215 aa). 52 to 57 contacts ATP; it reads GAGKTT. Residues 79–82, F91, 96–99, 122–123, K161, and 174–175 each bind adenosine 5'-phosphosulfate; these read DNVR, REEN, IS, and GF. Residues S197, 409 to 412, 511 to 515, and A553 each bind ATP; these read QLRN and GRDPA. A sulfate adenylyltransferase region spans residues 224–614; it reads IHELFVPENK…TDYYRSLEKN (391 aa).

This sequence in the N-terminal section; belongs to the APS kinase family. It in the C-terminal section; belongs to the sulfate adenylyltransferase family. In terms of tissue distribution, expressed in cartilage and adrenal gland.

The catalysed reaction is sulfate + ATP + H(+) = adenosine 5'-phosphosulfate + diphosphate. It carries out the reaction adenosine 5'-phosphosulfate + ATP = 3'-phosphoadenylyl sulfate + ADP + H(+). It functions in the pathway sulfur metabolism; sulfate assimilation. Functionally, bifunctional enzyme with both ATP sulfurylase and APS kinase activity, which mediates two steps in the sulfate activation pathway. The first step is the transfer of a sulfate group to ATP to yield adenosine 5'-phosphosulfate (APS), and the second step is the transfer of a phosphate group from ATP to APS yielding 3'-phosphoadenylylsulfate/PAPS, the activated sulfate donor used by sulfotransferases. In mammals, PAPS is the sole source of sulfate while APS appears to only be an intermediate in the sulfate-activation pathway. Plays indirectly an important role in skeletogenesis during postnatal growth. The chain is Bifunctional 3'-phosphoadenosine 5'-phosphosulfate synthase 2 (PAPSS2) from Homo sapiens (Human).